The following is a 392-amino-acid chain: Dual-specificity RNA methyltransferase RlmN (392 aa).

Catalysis depends on glutamate 115, which acts as the Proton acceptor. Positions 121–358 constitute a Radical SAM core domain; that stretch reads EVDRGTLCIS…YKAGYASPIR (238 aa). The cysteines at positions 128 and 369 are disulfide-linked. [4Fe-4S] cluster-binding residues include cysteine 135, cysteine 139, and cysteine 142. S-adenosyl-L-methionine is bound by residues 195–196, serine 227, 249–251, and asparagine 326; these read GE and SFH. The active-site S-methylcysteine intermediate is cysteine 369.

This sequence belongs to the radical SAM superfamily. RlmN family. [4Fe-4S] cluster is required as a cofactor.

Its subcellular location is the cytoplasm. The enzyme catalyses adenosine(2503) in 23S rRNA + 2 reduced [2Fe-2S]-[ferredoxin] + 2 S-adenosyl-L-methionine = 2-methyladenosine(2503) in 23S rRNA + 5'-deoxyadenosine + L-methionine + 2 oxidized [2Fe-2S]-[ferredoxin] + S-adenosyl-L-homocysteine. It catalyses the reaction adenosine(37) in tRNA + 2 reduced [2Fe-2S]-[ferredoxin] + 2 S-adenosyl-L-methionine = 2-methyladenosine(37) in tRNA + 5'-deoxyadenosine + L-methionine + 2 oxidized [2Fe-2S]-[ferredoxin] + S-adenosyl-L-homocysteine. Functionally, specifically methylates position 2 of adenine 2503 in 23S rRNA and position 2 of adenine 37 in tRNAs. m2A2503 modification seems to play a crucial role in the proofreading step occurring at the peptidyl transferase center and thus would serve to optimize ribosomal fidelity. The sequence is that of Dual-specificity RNA methyltransferase RlmN from Jannaschia sp. (strain CCS1).